The following is a 173-amino-acid chain: Alpha-crystallin A chain (173 aa).

At methionine 1 the chain carries N-acetylmethionine. Residues 1 to 63 (MDIAIQHPWF…RTVLDSGISE (63 aa)) are required for complex formation with BFSP1 and BFSP2. Glutamine 6 carries the post-translational modification Deamidated glutamine; partial. Serine 45 carries the phosphoserine modification. Glutamine 50 carries the post-translational modification Deamidated glutamine; partial. Residues 52–162 (LFRTVLDSGI…GHSERAIPVS (111 aa)) enclose the sHSP domain. Lysine 70 is modified (N6-acetyllysine). At glutamine 90 the chain carries Deamidated glutamine; partial. Lysine 99 bears the N6-acetyllysine mark. Histidine 100 lines the Zn(2+) pocket. Position 101 is a deamidated asparagine; partial (asparagine 101). Glutamate 102 and histidine 107 together coordinate Zn(2+). At serine 122 the chain carries Phosphoserine. The residue at position 123 (asparagine 123) is a Deamidated asparagine; partial. Residues 144 to 173 (PKVPSGLDAGHSERAIPVSREEKPSSAPSS) are disordered. Over residues 153–167 (GHSERAIPVSREEKP) the composition is skewed to basic and acidic residues. Histidine 154 serves as a coordination point for Zn(2+). O-linked (GlcNAc) serine glycosylation occurs at serine 162.

The protein belongs to the small heat shock protein (HSP20) family. As to quaternary structure, heteromer composed of three CRYAA and one CRYAB subunits. Inter-subunit bridging via zinc ions enhances stability, which is crucial as there is no protein turn over in the lens. Can also form homodimers and homotetramers (dimers of dimers) which serve as the building blocks of homooligomers. Within homooligomers, the zinc-binding motif is created from residues of 3 different molecules. His-100 and Glu-102 from one molecule are ligands of the zinc ion, and His-107 and His-154 residues from additional molecules complete the site with tetrahedral coordination geometry. Part of a complex required for lens intermediate filament formation composed of BFSP1, BFSP2 and CRYAA. In terms of processing, acetylation at Lys-70 may increase chaperone activity. Undergoes age-dependent proteolytical cleavage at the C-terminus.

It is found in the cytoplasm. It localises to the nucleus. In terms of biological role, contributes to the transparency and refractive index of the lens. Acts as a chaperone, preventing aggregation of various proteins under a wide range of stress conditions. Required for the correct formation of lens intermediate filaments as part of a complex composed of BFSP1, BFSP2 and CRYAA. This chain is Alpha-crystallin A chain (CRYAA), found in Tapirus indicus (Asiatic tapir).